Here is a 670-residue protein sequence, read N- to C-terminus: Acetyl-coenzyme A synthetase (670 aa).

Residues Arg205–Lys208 and Thr326 each bind CoA. ATP contacts are provided by residues Gly402 to Pro404, Ser426 to Thr431, Asp517, Arg532, and Arg543. Mg(2+) contacts are provided by Val554, His556, and Val559. Residue Arg601 participates in CoA binding. The residue at position 626 (Lys626) is an N6-acetyllysine.

Belongs to the ATP-dependent AMP-binding enzyme family. The cofactor is Mg(2+). In terms of processing, acetylated. Deacetylation by the SIR2-homolog deacetylase activates the enzyme.

It catalyses the reaction acetate + ATP + CoA = acetyl-CoA + AMP + diphosphate. In terms of biological role, catalyzes the conversion of acetate into acetyl-CoA (AcCoA), an essential intermediate at the junction of anabolic and catabolic pathways. AcsA undergoes a two-step reaction. In the first half reaction, AcsA combines acetate with ATP to form acetyl-adenylate (AcAMP) intermediate. In the second half reaction, it can then transfer the acetyl group from AcAMP to the sulfhydryl group of CoA, forming the product AcCoA. The polypeptide is Acetyl-coenzyme A synthetase (Pyrobaculum arsenaticum (strain DSM 13514 / JCM 11321 / PZ6)).